Consider the following 298-residue polypeptide: Rhodomycin D methylesterase DnrP (298 aa).

An AB hydrolase-1 domain is found at 25–277 (PLLLIAGGNL…VEIENMGHAL (253 aa)).

Belongs to the methyl esterase DnrP family.

The enzyme catalyses rhodomycin D + H2O = 10-carboxy-13-deoxycarminomycin + methanol + H(+). It carries out the reaction 4-O-methylrhodomycin D + H2O = 10-carboxy-13-deoxydaunorubicin + methanol + H(+). Its pathway is antibiotic biosynthesis; daunorubicin biosynthesis. It participates in antibiotic biosynthesis; carminomycin biosynthesis. In terms of biological role, involved in the biosynthesis of the anthracyclines carminomycin and daunorubicin (daunomycin) which are aromatic polyketide antibiotics that exhibit high cytotoxicity and are widely applied in the chemotherapy of a variety of cancers. Catalyzes the removal of methyl group from the carbomethoxy group of rhodomycin D (10-carbomethoxy-13-deoxycarminomycin) and 4-O-methylrhodomycin D to yield 10-carboxy-13-deoxycarminomycin and 10-carboxy-13-deoxydaunorubicin, respectively. Could be also involved in the decarboxylation of 10-carboxy-13-deoxycarminomycin and 10-carboxy-13-deoxydaunorubicin to yield 13-deoxycarminomycin and 13-deoxydaunorubicin, respectively. It seems that DnrK may influence the ability of DnrP to carry out the decarboxylation. The protein is Rhodomycin D methylesterase DnrP (dnrP) of Streptomyces peucetius.